The chain runs to 391 residues: Elongation factor Tu 2 (391 aa).

Positions 10–201 (KPHVNIGTIG…EVDNYIPTPE (192 aa)) constitute a tr-type G domain. The tract at residues 19-26 (GHVDHGKT) is G1. 19–26 (GHVDHGKT) is a binding site for GTP. Thr26 provides a ligand contact to Mg(2+). A G2 region spans residues 55-59 (GITIS). Residues 76 to 79 (DCPG) form a G3 region. GTP is bound by residues 76–80 (DCPGH) and 131–134 (NKVD). The interval 131–134 (NKVD) is G4. Positions 169–171 (SAL) are G5.

This sequence belongs to the TRAFAC class translation factor GTPase superfamily. Classic translation factor GTPase family. EF-Tu/EF-1A subfamily. As to quaternary structure, monomer.

It is found in the cytoplasm. It carries out the reaction GTP + H2O = GDP + phosphate + H(+). Functionally, GTP hydrolase that promotes the GTP-dependent binding of aminoacyl-tRNA to the A-site of ribosomes during protein biosynthesis. The polypeptide is Elongation factor Tu 2 (Bartonella quintana (strain Toulouse) (Rochalimaea quintana)).